The following is a 110-amino-acid chain: Iron-sulfur cluster assembly protein CyaY (110 aa).

Belongs to the frataxin family.

Involved in iron-sulfur (Fe-S) cluster assembly. May act as a regulator of Fe-S biogenesis. The polypeptide is Iron-sulfur cluster assembly protein CyaY (Pseudomonas syringae pv. tomato (strain ATCC BAA-871 / DC3000)).